We begin with the raw amino-acid sequence, 63 residues long: Large ribosomal subunit protein uL29 (63 aa).

Belongs to the universal ribosomal protein uL29 family.

This is Large ribosomal subunit protein uL29 from Shigella dysenteriae serotype 1 (strain Sd197).